Reading from the N-terminus, the 204-residue chain is UPF0637 protein lmo1065 (204 aa).

Belongs to the UPF0637 family.

The chain is UPF0637 protein lmo1065 from Listeria monocytogenes serovar 1/2a (strain ATCC BAA-679 / EGD-e).